Consider the following 203-residue polypeptide: Large ribosomal subunit protein bL25 (203 aa).

The segment at 1-21 (MMENLQVNQREKKTRHSSRQC) is disordered. The span at 12–21 (KKTRHSSRQC) shows a compositional bias: basic residues.

It belongs to the bacterial ribosomal protein bL25 family. CTC subfamily. As to quaternary structure, part of the 50S ribosomal subunit; part of the 5S rRNA/L5/L18/L25 subcomplex. Contacts the 5S rRNA. Binds to the 5S rRNA independently of L5 and L18.

Its function is as follows. This is one of the proteins that binds to the 5S RNA in the ribosome where it forms part of the central protuberance. The polypeptide is Large ribosomal subunit protein bL25 (Clostridium perfringens (strain 13 / Type A)).